A 556-amino-acid polypeptide reads, in one-letter code: Oxygen-dependent choline dehydrogenase (556 aa).

FAD is bound at residue 6 to 35 (DYIIIGAGSAGNVLAARLTEDPGVSVLLLE). Histidine 475 acts as the Proton acceptor in catalysis.

The protein belongs to the GMC oxidoreductase family. The cofactor is FAD.

It carries out the reaction choline + A = betaine aldehyde + AH2. The enzyme catalyses betaine aldehyde + NAD(+) + H2O = glycine betaine + NADH + 2 H(+). It functions in the pathway amine and polyamine biosynthesis; betaine biosynthesis via choline pathway; betaine aldehyde from choline (cytochrome c reductase route): step 1/1. Functionally, involved in the biosynthesis of the osmoprotectant glycine betaine. Catalyzes the oxidation of choline to betaine aldehyde and betaine aldehyde to glycine betaine at the same rate. The protein is Oxygen-dependent choline dehydrogenase of Xanthomonas campestris pv. campestris (strain 8004).